The sequence spans 121 residues: Large ribosomal subunit protein uL14c (121 aa).

The protein belongs to the universal ribosomal protein uL14 family. In terms of assembly, part of the 50S ribosomal subunit.

It localises to the plastid. Its subcellular location is the chloroplast. Functionally, binds to 23S rRNA. The polypeptide is Large ribosomal subunit protein uL14c (Euglena gracilis).